A 1124-amino-acid chain; its full sequence is Angiopoietin-1 receptor (1124 aa).

A signal peptide spans 1–22 (MDSLASLVLCGVSLLLSGTVEG). At 23-748 (AMDLILINSL…ADLGGGKMLL (726 aa)) the chain is on the extracellular side. A disulfide bridge connects residues Cys-44 and Cys-102. An Ig-like C2-type 1 domain is found at 44 to 123 (CIASGWRPHE…RTMKMRQQAS (80 aa)). 2 N-linked (GlcNAc...) asparagine glycosylation sites follow: Asn-140 and Asn-158. EGF-like domains are found at residues 210 to 252 (RCEA…RTCE), 254 to 299 (ACEL…LQCN), and 301 to 341 (ACHP…LQCE). 13 cysteine pairs are disulfide-bonded: Cys-211–Cys-220, Cys-224–Cys-233, Cys-227–Cys-240, Cys-242–Cys-251, Cys-255–Cys-264, Cys-268–Cys-274, Cys-280–Cys-287, Cys-289–Cys-298, Cys-302–Cys-311, Cys-315–Cys-323, Cys-317–Cys-329, Cys-331–Cys-340, and Cys-370–Cys-424. Residues 350-440 (PKIVDLPDHI…GMVEKPFNIS (91 aa)) form the Ig-like C2-type 2 domain. Asn-399, Asn-438, Asn-464, Asn-560, Asn-596, Asn-649, and Asn-691 each carry an N-linked (GlcNAc...) asparagine glycan. Fibronectin type-III domains follow at residues 447 to 541 (PLNA…TASI), 545 to 636 (PPRG…TLSD), and 641 to 735 (QPEN…LPES). A helical transmembrane segment spans residues 749-769 (IAILGSAGMTCLTVLLAFLII). The Cytoplasmic portion of the chain corresponds to 770–1124 (LQLKRANVQR…GIDCSAEEAA (355 aa)). A Protein kinase domain is found at 824–1096 (IKFQDVIGEG…QILVSLNRML (273 aa)). Residues 830-838 (IGEGNFGQV) and Lys-855 contribute to the ATP site. Tyr-860 bears the Phosphotyrosine; by autocatalysis mark. Asp-964 acts as the Proton acceptor in catalysis. Phosphotyrosine; by autocatalysis occurs at positions 992, 1102, and 1108.

This sequence belongs to the protein kinase superfamily. Tyr protein kinase family. Tie subfamily. As to quaternary structure, homodimer. Heterodimer with TIE1. Interacts with ANGPT1, ANGPT2 and ANGPT4. At cell-cell contacts in quiescent cells, forms a signaling complex composed of ANGPT1 plus TEK molecules from two adjoining cells. In the absence of endothelial cell-cell contacts, interaction with ANGPT1 mediates contacts with the extracellular matrix. Interacts with PTPRB; this promotes endothelial cell-cell adhesion. Interacts with DOK2, GRB2, GRB7, GRB14, PIK3R1 and PTPN11/SHP2. Colocalizes with DOK2 at contacts with the extracellular matrix in migrating cells. Interacts (tyrosine phosphorylated) with TNIP2. Interacts (tyrosine phosphorylated) with SHC1 (via SH2 domain). Post-translationally, proteolytic processing leads to the shedding of the extracellular domain (soluble TIE-2 alias sTIE-2). Autophosphorylated on tyrosine residues in response to ligand binding. Autophosphorylation occurs in trans, i.e. one subunit of the dimeric receptor phosphorylates tyrosine residues on the other subunit. Autophosphorylation occurs in a sequential manner, where Tyr-992 in the kinase activation loop is phosphorylated first, followed by autophosphorylation at Tyr-1108 and at additional tyrosine residues. ANGPT1-induced phosphorylation is impaired during hypoxia, due to increased expression of ANGPT2. Phosphorylation is important for interaction with GRB14, PIK3R1 and PTPN11. Phosphorylation at Tyr-1102 is important for interaction with SHC1, GRB2 and GRB7. Phosphorylation at Tyr-1108 is important for interaction with DOK2 and for coupling to downstream signal transduction pathways in endothelial cells. Dephosphorylated by PTPRB. In terms of processing, ubiquitinated. The phosphorylated receptor is ubiquitinated and internalized, leading to its degradation. As to expression, detected in umbilical vein endothelial cells. Proteolytic processing gives rise to a soluble extracellular domain that is detected in blood plasma (at protein level). Predominantly expressed in endothelial cells and their progenitors, the angioblasts. Has been directly found in placenta and lung, with a lower level in umbilical vein endothelial cells, brain and kidney.

It localises to the cell membrane. Its subcellular location is the cell junction. The protein resides in the focal adhesion. The protein localises to the cytoplasm. It is found in the cytoskeleton. It localises to the secreted. The catalysed reaction is L-tyrosyl-[protein] + ATP = O-phospho-L-tyrosyl-[protein] + ADP + H(+). Angiopoietin binding leads to receptor dimerization and activation by autophosphorylation at Tyr-992 on the kinase activation loop. Inhibited by staurosporine, K252a, PP2, damnacanthal, SB203580, CEP-11207, CEP-11981 and CE-245677. Inhibited by triazine, thienopyrimidine and thiazolopyrimidine derivatives. Functionally, tyrosine-protein kinase that acts as a cell-surface receptor for ANGPT1, ANGPT2 and ANGPT4 and regulates angiogenesis, endothelial cell survival, proliferation, migration, adhesion and cell spreading, reorganization of the actin cytoskeleton, but also maintenance of vascular quiescence. Has anti-inflammatory effects by preventing the leakage of pro-inflammatory plasma proteins and leukocytes from blood vessels. Required for normal angiogenesis and heart development during embryogenesis. Required for post-natal hematopoiesis. After birth, activates or inhibits angiogenesis, depending on the context. Inhibits angiogenesis and promotes vascular stability in quiescent vessels, where endothelial cells have tight contacts. In quiescent vessels, ANGPT1 oligomers recruit TEK to cell-cell contacts, forming complexes with TEK molecules from adjoining cells, and this leads to preferential activation of phosphatidylinositol 3-kinase and the AKT1 signaling cascades. In migrating endothelial cells that lack cell-cell adhesions, ANGT1 recruits TEK to contacts with the extracellular matrix, leading to the formation of focal adhesion complexes, activation of PTK2/FAK and of the downstream kinases MAPK1/ERK2 and MAPK3/ERK1, and ultimately to the stimulation of sprouting angiogenesis. ANGPT1 signaling triggers receptor dimerization and autophosphorylation at specific tyrosine residues that then serve as binding sites for scaffold proteins and effectors. Signaling is modulated by ANGPT2 that has lower affinity for TEK, can promote TEK autophosphorylation in the absence of ANGPT1, but inhibits ANGPT1-mediated signaling by competing for the same binding site. Signaling is also modulated by formation of heterodimers with TIE1, and by proteolytic processing that gives rise to a soluble TEK extracellular domain. The soluble extracellular domain modulates signaling by functioning as decoy receptor for angiopoietins. TEK phosphorylates DOK2, GRB7, GRB14, PIK3R1; SHC1 and TIE1. The polypeptide is Angiopoietin-1 receptor (Homo sapiens (Human)).